Reading from the N-terminus, the 640-residue chain is Threonine--tRNA ligase (640 aa).

The region spanning 1-61 (MPIITLPNGD…TEDSTLQIIT (61 aa)) is the TGS domain. Positions 242-533 (DHRKIGKALD…LIEHYAGFMP (292 aa)) are catalytic. Positions 333, 384, and 510 each coordinate Zn(2+).

The protein belongs to the class-II aminoacyl-tRNA synthetase family. Homodimer. The cofactor is Zn(2+).

The protein localises to the cytoplasm. It carries out the reaction tRNA(Thr) + L-threonine + ATP = L-threonyl-tRNA(Thr) + AMP + diphosphate + H(+). Its function is as follows. Catalyzes the attachment of threonine to tRNA(Thr) in a two-step reaction: L-threonine is first activated by ATP to form Thr-AMP and then transferred to the acceptor end of tRNA(Thr). Also edits incorrectly charged L-seryl-tRNA(Thr). The sequence is that of Threonine--tRNA ligase from Acinetobacter baumannii (strain AB307-0294).